We begin with the raw amino-acid sequence, 153 residues long: Large ribosomal subunit protein uL30 (153 aa).

Belongs to the universal ribosomal protein uL30 family. Part of the 50S ribosomal subunit.

The protein is Large ribosomal subunit protein uL30 of Methanosarcina mazei (strain ATCC BAA-159 / DSM 3647 / Goe1 / Go1 / JCM 11833 / OCM 88) (Methanosarcina frisia).